A 285-amino-acid chain; its full sequence is Nucleotide-binding protein CD630_34000 (285 aa).

Residue 8–15 (GLSGSGKS) participates in ATP binding. 59–62 (DIRG) lines the GTP pocket.

Belongs to the RapZ-like family.

Functionally, displays ATPase and GTPase activities. This is Nucleotide-binding protein CD630_34000 from Clostridioides difficile (strain 630) (Peptoclostridium difficile).